A 140-amino-acid chain; its full sequence is GTP-dependent dephospho-CoA kinase (140 aa).

GTP-binding residues include D21, V22, V23, D40, K42, and E92.

Belongs to the GTP-dependent DPCK family.

It carries out the reaction 3'-dephospho-CoA + GTP = GDP + CoA + H(+). It functions in the pathway cofactor biosynthesis; coenzyme A biosynthesis. In terms of biological role, catalyzes the GTP-dependent phosphorylation of the 3'-hydroxyl group of dephosphocoenzyme A to form coenzyme A (CoA). In Pyrobaculum aerophilum (strain ATCC 51768 / DSM 7523 / JCM 9630 / CIP 104966 / NBRC 100827 / IM2), this protein is GTP-dependent dephospho-CoA kinase.